The sequence spans 170 residues: MSGLTHLDERGQARMVEVGGKEATRREAVARGEVSMRPETLELILGGKVPKGEVFGVARVAGIMAAKKTPELIPLCHPLMLTGIDVQFRPDPERSRVEIEARVRTTGQTGVEMEALTAVTVAALAIYDMCKAVDREMVIGAVRLVHKSGGKSGVFERKGEEAWTEMQGTE.

Substrate contacts are provided by residues 75–77 and 113–114; these read LCH and ME. Asp128 is an active-site residue.

This sequence belongs to the MoaC family. In terms of assembly, homohexamer; trimer of dimers.

It catalyses the reaction (8S)-3',8-cyclo-7,8-dihydroguanosine 5'-triphosphate = cyclic pyranopterin phosphate + diphosphate. Its pathway is cofactor biosynthesis; molybdopterin biosynthesis. Functionally, catalyzes the conversion of (8S)-3',8-cyclo-7,8-dihydroguanosine 5'-triphosphate to cyclic pyranopterin monophosphate (cPMP). The sequence is that of Cyclic pyranopterin monophosphate synthase from Pelotomaculum thermopropionicum (strain DSM 13744 / JCM 10971 / SI).